The sequence spans 178 residues: Cytidylate kinase (178 aa).

7 to 15 (GLPGTGTTT) provides a ligand contact to ATP.

The protein belongs to the cytidylate kinase family. Type 2 subfamily.

Its subcellular location is the cytoplasm. It catalyses the reaction CMP + ATP = CDP + ADP. The enzyme catalyses dCMP + ATP = dCDP + ADP. The chain is Cytidylate kinase from Methanococcus aeolicus (strain ATCC BAA-1280 / DSM 17508 / OCM 812 / Nankai-3).